The primary structure comprises 387 residues: S-adenosylmethionine synthase (387 aa).

Position 19 (histidine 19) interacts with ATP. Aspartate 21 is a Mg(2+) binding site. Position 47 (glutamate 47) interacts with K(+). Glutamine 103 provides a ligand contact to L-methionine. The tract at residues 103-113 is flexible loop; sequence QSPDIAQGVEL. ATP is bound by residues 167–169, 233–234, aspartate 242, 248–249, alanine 265, and lysine 269; these read DMK, RF, and RK. An L-methionine-binding site is contributed by aspartate 242. Lysine 273 contributes to the L-methionine binding site.

The protein belongs to the AdoMet synthase family. Homotetramer; dimer of dimers. The cofactor is Mg(2+). K(+) is required as a cofactor.

It localises to the cytoplasm. It catalyses the reaction L-methionine + ATP + H2O = S-adenosyl-L-methionine + phosphate + diphosphate. It participates in amino-acid biosynthesis; S-adenosyl-L-methionine biosynthesis; S-adenosyl-L-methionine from L-methionine: step 1/1. Catalyzes the formation of S-adenosylmethionine (AdoMet) from methionine and ATP. The overall synthetic reaction is composed of two sequential steps, AdoMet formation and the subsequent tripolyphosphate hydrolysis which occurs prior to release of AdoMet from the enzyme. The protein is S-adenosylmethionine synthase of Mycoplasma mycoides subsp. mycoides SC (strain CCUG 32753 / NCTC 10114 / PG1).